We begin with the raw amino-acid sequence, 291 residues long: Phytanoyl-CoA dioxygenase domain-containing protein 1 (291 aa).

Thr55 is modified (phosphothreonine). 2-oxoglutarate-binding positions include Lys102, Met141, 156–158 (HQD), and Trp174. The Fe cation site is built by His156 and Asp158. Residue His246 participates in Fe cation binding. The 2-oxoglutarate site is built by Ser248 and Arg257.

This sequence belongs to the PhyH family. PHYHD1 subfamily. Fe cation is required as a cofactor.

Its activity is regulated as follows. Activity is increased by ascorbate. Inhibited by myristoyl-CoA. Functionally, 2-oxoglutarate(2OG)-dependent dioxygenase that catalyzes the conversion of 2-oxoglutarate to succinate and CO(2) in an iron-dependent manner. However, does not couple 2OG turnover to the hydroxylation of acyl-coenzyme A derivatives, implying that it is not directly involved in phytanoyl coenzyme-A metabolism. Does not show detectable activity towards fatty acid CoA thioesters. Its function is as follows. Isoform 2 probably lacks enzyme activity. In terms of biological role, isoform 3 probably lacks enzyme activity. In Homo sapiens (Human), this protein is Phytanoyl-CoA dioxygenase domain-containing protein 1.